Reading from the N-terminus, the 261-residue chain is Proline-rich protein HaeIII subfamily 1 (261 aa).

An N-terminal signal peptide occupies residues 1 to 15 (MLVVLFTVALLALSS). The tract at residues 15-261 (SAQGPREENQ…PPQGRPQGPR (247 aa)) is disordered. Pro residues-rich tracts occupy residues 32 to 44 (QRPP…PRPP) and 51 to 237 (GPPP…PPTG). Residues 238–261 (GPQQTPPLAGNTQGPPQGRPQGPR) show a composition bias toward low complexity.

Its subcellular location is the secreted. The polypeptide is Proline-rich protein HaeIII subfamily 1 (Prh1) (Mus musculus (Mouse)).